Reading from the N-terminus, the 415-residue chain is UDP-N-acetylmuramoylalanine--D-glutamate ligase (415 aa).

Position 91–97 (91–97) interacts with ATP; the sequence is GTDGKST.

Belongs to the MurCDEF family.

It is found in the cytoplasm. The catalysed reaction is UDP-N-acetyl-alpha-D-muramoyl-L-alanine + D-glutamate + ATP = UDP-N-acetyl-alpha-D-muramoyl-L-alanyl-D-glutamate + ADP + phosphate + H(+). It participates in cell wall biogenesis; peptidoglycan biosynthesis. Its function is as follows. Cell wall formation. Catalyzes the addition of glutamate to the nucleotide precursor UDP-N-acetylmuramoyl-L-alanine (UMA). In Aquifex aeolicus (strain VF5), this protein is UDP-N-acetylmuramoylalanine--D-glutamate ligase.